Reading from the N-terminus, the 835-residue chain is Ribonuclease R (835 aa).

Positions 267 to 593 (RVDLRELPLV…LLHRAIKYLI (327 aa)) constitute an RNB domain. The region spanning 652–733 (GDELEGVIAN…DDKQIDFELV (82 aa)) is the S1 motif domain. Residues 739-754 (LRGEGKTAKKRAAEAK) are compositionally biased toward basic and acidic residues. The segment at 739–835 (LRGEGKTAKK…KTKRTKQDAQ (97 aa)) is disordered. Over residues 755–764 (RKAKEKKRAA) the composition is skewed to basic residues. A compositionally biased stretch (low complexity) spans 765–777 (TRSSSKESATARA). A compositionally biased stretch (basic and acidic residues) spans 783–793 (PTKRPEQTDSG). Positions 809–829 (KPKVKKAHKKKPHSKPKKTKR) are enriched in basic residues.

This sequence belongs to the RNR ribonuclease family. RNase R subfamily.

It is found in the cytoplasm. It catalyses the reaction Exonucleolytic cleavage in the 3'- to 5'-direction to yield nucleoside 5'-phosphates.. In terms of biological role, 3'-5' exoribonuclease that releases 5'-nucleoside monophosphates and is involved in maturation of structured RNAs. In Vibrio parahaemolyticus serotype O3:K6 (strain RIMD 2210633), this protein is Ribonuclease R.